The chain runs to 407 residues: Protein COS9 (407 aa).

3 helical membrane-spanning segments follow: residues 75-95 (TWLL…IKSI), 98-118 (IFPF…LPNI), and 261-281 (IFNL…YVSW).

The protein belongs to the DUP/COS family.

The protein localises to the membrane. This chain is Protein COS9 (COS9), found in Saccharomyces cerevisiae (strain ATCC 204508 / S288c) (Baker's yeast).